We begin with the raw amino-acid sequence, 121 residues long: Fluoride-specific ion channel FluC 1 (121 aa).

A run of 4 helical transmembrane segments spans residues 3–23 (YLYI…LSML), 29–49 (IPLG…SIGA), 67–87 (TGLL…VTLF), and 92–112 (FILF…SCYL). Residues Gly-71 and Thr-74 each contribute to the Na(+) site.

Belongs to the fluoride channel Fluc/FEX (TC 1.A.43) family.

It is found in the cell membrane. The catalysed reaction is fluoride(in) = fluoride(out). Its activity is regulated as follows. Na(+) is not transported, but it plays an essential structural role and its presence is essential for fluoride channel function. Its function is as follows. Fluoride-specific ion channel. Important for reducing fluoride concentration in the cell, thus reducing its toxicity. This Staphylococcus epidermidis (strain ATCC 35984 / DSM 28319 / BCRC 17069 / CCUG 31568 / BM 3577 / RP62A) protein is Fluoride-specific ion channel FluC 1.